A 233-amino-acid chain; its full sequence is Ion-translocating oxidoreductase complex subunit E (233 aa).

6 consecutive transmembrane segments (helical) span residues 18 to 38, 39 to 59, 69 to 89, 92 to 112, 128 to 148, and 182 to 202; these read ALVQ…ATNA, LGLG…VSAL, IPIY…LINA, FGLY…CIVI, ALDG…LGAL, and PFLL…LLAG.

The protein belongs to the NqrDE/RnfAE family. The complex is composed of six subunits: RnfA, RnfB, RnfC, RnfD, RnfE and RnfG.

It is found in the cell inner membrane. Functionally, part of a membrane-bound complex that couples electron transfer with translocation of ions across the membrane. This Yersinia pseudotuberculosis serotype O:1b (strain IP 31758) protein is Ion-translocating oxidoreductase complex subunit E.